We begin with the raw amino-acid sequence, 231 residues long: Biosynthetic peptidoglycan transglycosylase (231 aa).

Residues 12–32 (LLAAFALLLLWQVWLFAQVAW) form a helical membrane-spanning segment.

The protein belongs to the glycosyltransferase 51 family.

It is found in the cell inner membrane. It catalyses the reaction [GlcNAc-(1-&gt;4)-Mur2Ac(oyl-L-Ala-gamma-D-Glu-L-Lys-D-Ala-D-Ala)](n)-di-trans,octa-cis-undecaprenyl diphosphate + beta-D-GlcNAc-(1-&gt;4)-Mur2Ac(oyl-L-Ala-gamma-D-Glu-L-Lys-D-Ala-D-Ala)-di-trans,octa-cis-undecaprenyl diphosphate = [GlcNAc-(1-&gt;4)-Mur2Ac(oyl-L-Ala-gamma-D-Glu-L-Lys-D-Ala-D-Ala)](n+1)-di-trans,octa-cis-undecaprenyl diphosphate + di-trans,octa-cis-undecaprenyl diphosphate + H(+). The protein operates within cell wall biogenesis; peptidoglycan biosynthesis. Its function is as follows. Peptidoglycan polymerase that catalyzes glycan chain elongation from lipid-linked precursors. The polypeptide is Biosynthetic peptidoglycan transglycosylase (Azoarcus sp. (strain BH72)).